The following is a 159-amino-acid chain: Serine-protein kinase RsbW (159 aa).

Belongs to the anti-sigma-factor family.

It carries out the reaction L-seryl-[protein] + ATP = O-phospho-L-seryl-[protein] + ADP + H(+). The catalysed reaction is L-threonyl-[protein] + ATP = O-phospho-L-threonyl-[protein] + ADP + H(+). In terms of biological role, negative regulator of sigma-B activity. Phosphorylates and inactivates its specific antagonist protein, RsbV. Upon phosphorylation of RsbV, RsbW is released and binds to sigma-B, thereby blocking its ability to form an RNA polymerase holoenzyme (E-sigma-B). The sequence is that of Serine-protein kinase RsbW from Staphylococcus aureus.